Reading from the N-terminus, the 476-residue chain is Immune evasion protein OPG047 (476 aa).

The BTB domain maps to 10-90 (CKNILALSMT…SYTGKVYIDS (81 aa)). The 94-residue stretch at 125–218 (CVECYMMGIE…SNYLSPRGIN (94 aa)) folds into the BACK domain. 5 Kelch repeats span residues 269–315 (VVYL…PANN), 316–359 (KLYV…SINN), 361–404 (IYVM…VFGR), 406–443 (LFLV…IVDN), and 444–476 (KLLL…WDGK).

The protein belongs to the orthopoxvirus OPG047 family.

Might have a role in the suppression of host immune response. This chain is Immune evasion protein OPG047 (OPG047), found in Vaccinia virus (strain Ankara) (VACV).